The chain runs to 300 residues: Acetylglutamate kinase (300 aa).

Residues 73 to 74, Arg95, and Asn197 each bind substrate; that span reads GG.

It belongs to the acetylglutamate kinase family. ArgB subfamily.

Its subcellular location is the cytoplasm. It carries out the reaction N-acetyl-L-glutamate + ATP = N-acetyl-L-glutamyl 5-phosphate + ADP. Its pathway is amino-acid biosynthesis; L-arginine biosynthesis; N(2)-acetyl-L-ornithine from L-glutamate: step 2/4. Catalyzes the ATP-dependent phosphorylation of N-acetyl-L-glutamate. The sequence is that of Acetylglutamate kinase from Bordetella avium (strain 197N).